Consider the following 249-residue polypeptide: NH(3)-dependent NAD(+) synthetase (249 aa).

29-36 (GVSGGVDS) contributes to the ATP binding site. Mg(2+) is bound at residue D35. Residue R116 coordinates deamido-NAD(+). Residue T136 participates in ATP binding. E141 serves as a coordination point for Mg(2+). 2 residues coordinate deamido-NAD(+): K149 and D156. Positions 165 and 187 each coordinate ATP. 233–234 (HK) contacts deamido-NAD(+).

Belongs to the NAD synthetase family. In terms of assembly, homodimer.

It catalyses the reaction deamido-NAD(+) + NH4(+) + ATP = AMP + diphosphate + NAD(+) + H(+). It participates in cofactor biosynthesis; NAD(+) biosynthesis; NAD(+) from deamido-NAD(+) (ammonia route): step 1/1. Functionally, catalyzes the ATP-dependent amidation of deamido-NAD to form NAD. Uses ammonia as a nitrogen source. The chain is NH(3)-dependent NAD(+) synthetase from Syntrophomonas wolfei subsp. wolfei (strain DSM 2245B / Goettingen).